A 435-amino-acid chain; its full sequence is 5-methylthioadenosine/S-adenosylhomocysteine deaminase (435 aa).

His65 and His67 together coordinate Zn(2+). 3 residues coordinate substrate: Glu94, Arg150, and His189. His216 contributes to the Zn(2+) binding site. Residues Glu219 and Asp304 each coordinate substrate. Residue Asp304 participates in Zn(2+) binding.

Belongs to the metallo-dependent hydrolases superfamily. MTA/SAH deaminase family. Zn(2+) is required as a cofactor.

The catalysed reaction is S-adenosyl-L-homocysteine + H2O + H(+) = S-inosyl-L-homocysteine + NH4(+). It carries out the reaction S-methyl-5'-thioadenosine + H2O + H(+) = S-methyl-5'-thioinosine + NH4(+). Catalyzes the deamination of 5-methylthioadenosine and S-adenosyl-L-homocysteine into 5-methylthioinosine and S-inosyl-L-homocysteine, respectively. Is also able to deaminate adenosine. In Bacillus thuringiensis (strain Al Hakam), this protein is 5-methylthioadenosine/S-adenosylhomocysteine deaminase.